A 104-amino-acid chain; its full sequence is Large ribosomal subunit protein uL24 (104 aa).

Residues 85–96 are compositionally biased toward basic and acidic residues; sequence IKRELGAKEKAR. Positions 85–104 are disordered; the sequence is IKRELGAKEKARADRRKTAK.

The protein belongs to the universal ribosomal protein uL24 family. As to quaternary structure, part of the 50S ribosomal subunit.

Its function is as follows. One of two assembly initiator proteins, it binds directly to the 5'-end of the 23S rRNA, where it nucleates assembly of the 50S subunit. In terms of biological role, one of the proteins that surrounds the polypeptide exit tunnel on the outside of the subunit. This is Large ribosomal subunit protein uL24 from Anaeromyxobacter sp. (strain Fw109-5).